The following is a 398-amino-acid chain: Phosphoglycerate kinase (398 aa).

Substrate-binding positions include 21-23, Arg36, 59-62, Arg118, and Arg151; these read DIN and HFGR. Residues Lys201, Glu323, and 353-356 contribute to the ATP site; that span reads GGDT.

This sequence belongs to the phosphoglycerate kinase family. In terms of assembly, monomer.

The protein resides in the cytoplasm. The enzyme catalyses (2R)-3-phosphoglycerate + ATP = (2R)-3-phospho-glyceroyl phosphate + ADP. The protein operates within carbohydrate degradation; glycolysis; pyruvate from D-glyceraldehyde 3-phosphate: step 2/5. This Ruegeria pomeroyi (strain ATCC 700808 / DSM 15171 / DSS-3) (Silicibacter pomeroyi) protein is Phosphoglycerate kinase.